The following is an 82-amino-acid chain: RNA-binding protein GTNG_0100 (82 aa).

It belongs to the eukaryotic ribosomal protein eL8 family.

This Geobacillus thermodenitrificans (strain NG80-2) protein is RNA-binding protein GTNG_0100.